The chain runs to 426 residues: UPF0597 protein CLB_1750 (426 aa).

This sequence belongs to the UPF0597 family.

The sequence is that of UPF0597 protein CLB_1750 from Clostridium botulinum (strain ATCC 19397 / Type A).